The sequence spans 913 residues: Polyribonucleotide nucleotidyltransferase (913 aa).

The segment at 407-427 (YMHNYEMPPYSTGETGRVGSP) is disordered. 2 residues coordinate Mg(2+): aspartate 521 and aspartate 527. The region spanning 587-646 (PRIITTSVPVEKIGEVIGPKGKMINQIQEDTGAEIAIEDDGTVFISSEGGEAAEKAKAII) is the KH domain. The S1 motif domain occupies 658 to 730 (GETYNGKVVK…DRGKISLAIP (73 aa)). The interval 727 to 913 (LAIPGFEDQE…VRRDFDPFED (187 aa)) is disordered. 3 stretches are compositionally biased toward basic and acidic residues: residues 742–789 (SRGD…RRSD), 797–865 (DRPR…DRRG), and 872–898 (RGSD…ERTE).

This sequence belongs to the polyribonucleotide nucleotidyltransferase family. Mg(2+) serves as cofactor.

It is found in the cytoplasm. It catalyses the reaction RNA(n+1) + phosphate = RNA(n) + a ribonucleoside 5'-diphosphate. In terms of biological role, involved in mRNA degradation. Catalyzes the phosphorolysis of single-stranded polyribonucleotides processively in the 3'- to 5'-direction. In Bifidobacterium longum (strain DJO10A), this protein is Polyribonucleotide nucleotidyltransferase.